Consider the following 120-residue polypeptide: U13-lycotoxin-Ls1a (120 aa).

A signal peptide spans 1 to 16 (MKTLFVLISILYAVYC). A propeptide spanning residues 17–54 (FSSEEDVDSAYLANELEPVEDINSEQYAALEPKEEQER) is cleaved from the precursor. Cystine bridges form between cysteine 56/cysteine 70, cysteine 63/cysteine 76, cysteine 69/cysteine 87, and cysteine 78/cysteine 85. Positions 56–95 (CADMGQDCKDDCDCCLNIATCNCWFGRYFCSCTFGDYQTC) constitute an Agouti domain.

This sequence belongs to the neurotoxin 05 (agouti) family. Post-translationally, contains 6 disulfide bonds. In terms of tissue distribution, expressed by the venom gland.

The protein resides in the secreted. This Lycosa singoriensis (Wolf spider) protein is U13-lycotoxin-Ls1a.